The primary structure comprises 86 residues: MDPFLIKLIGFAAATCTTVAYAPQFIKVLKTRSARDISLGMFLVMVLGLALWLIYGLLSGDAPLIASNAVTMLLAGGILVMKLRYG.

A run of 3 helical transmembrane segments spans residues 3–23 (PFLIKLIGFAAATCTTVAYAP), 37–57 (ISLGMFLVMVLGLALWLIYGL), and 61–81 (DAPLIASNAVTMLLAGGILVM). Residues 6 to 63 (IKLIGFAAATCTTVAYAPQFIKVLKTRSARDISLGMFLVMVLGLALWLIYGLLSGDAP) form the PQ-loop domain.

In terms of assembly, homodimer. Homooligomer.

The protein resides in the cell membrane. Functionally, mediates sucrose transmembrane transport down a concentration gradient. In Bradyrhizobium diazoefficiens (strain JCM 10833 / BCRC 13528 / IAM 13628 / NBRC 14792 / USDA 110), this protein is Sugar transporter SemiSWEET.